The chain runs to 205 residues: NADH-quinone oxidoreductase subunit I (205 aa).

2 4Fe-4S ferredoxin-type domains span residues 75 to 104 (RLLE…METS) and 114 to 143 (HEYT…HGGR). Residues cysteine 84, cysteine 87, cysteine 90, cysteine 94, cysteine 123, cysteine 126, cysteine 129, and cysteine 133 each contribute to the [4Fe-4S] cluster site.

It belongs to the complex I 23 kDa subunit family. NDH-1 is composed of 14 different subunits. Subunits NuoA, H, J, K, L, M, N constitute the membrane sector of the complex. [4Fe-4S] cluster serves as cofactor.

It is found in the cell inner membrane. The catalysed reaction is a quinone + NADH + 5 H(+)(in) = a quinol + NAD(+) + 4 H(+)(out). In terms of biological role, NDH-1 shuttles electrons from NADH, via FMN and iron-sulfur (Fe-S) centers, to quinones in the respiratory chain. The immediate electron acceptor for the enzyme in this species is believed to be ubiquinone. Couples the redox reaction to proton translocation (for every two electrons transferred, four hydrogen ions are translocated across the cytoplasmic membrane), and thus conserves the redox energy in a proton gradient. The sequence is that of NADH-quinone oxidoreductase subunit I from Wolinella succinogenes (strain ATCC 29543 / DSM 1740 / CCUG 13145 / JCM 31913 / LMG 7466 / NCTC 11488 / FDC 602W) (Vibrio succinogenes).